A 414-amino-acid polypeptide reads, in one-letter code: Putative transporter AmpG 4 (414 aa).

12 helical membrane passes run I15–V35, I44–W63, W84–P104, T109–V129, V150–I170, L177–N197, F230–A250, I268–V288, F295–L315, A324–V344, Y360–G379, and G389–N409.

This sequence belongs to the major facilitator superfamily.

It is found in the cell inner membrane. In Rickettsia felis (strain ATCC VR-1525 / URRWXCal2) (Rickettsia azadi), this protein is Putative transporter AmpG 4 (ampG4).